Reading from the N-terminus, the 149-residue chain is Calmodulin-1 (149 aa).

At alanine 2 the chain carries N-acetylalanine. 4 consecutive EF-hand domains span residues 8-43 (EQIAEFKEAFSLFDKDGDGTITTKELGTVMRSLGQN), 44-79 (PTEAELQDMINEVDADGNGTIDFPEFLTMMARKMKD), 81-116 (DSEEEIREAFRVFDKDGNGYISAAELRHVMTNLGEK), and 117-149 (LTDEEVDEMIREADIDGDGQVNYEEFVQMMTAK). Aspartate 21 contacts Ca(2+). Lysine 22 bears the N6-acetyllysine; alternate mark. A Glycyl lysine isopeptide (Lys-Gly) (interchain with G-Cter in SUMO2); alternate cross-link involves residue lysine 22. A Glycyl lysine isopeptide (Lys-Gly) (interchain with G-Cter in ubiquitin); alternate cross-link involves residue lysine 22. 4 residues coordinate Ca(2+): aspartate 23, aspartate 25, threonine 27, and glutamate 32. Phosphothreonine; by CaMK4 is present on threonine 45. 5 residues coordinate Ca(2+): aspartate 57, aspartate 59, asparagine 61, threonine 63, and glutamate 68. The necessary and sufficient for interaction with PCP4 stretch occupies residues 77 to 149 (MKDTDSEEEI…EEFVQMMTAK (73 aa)). Serine 82 is modified (phosphoserine). Aspartate 94 provides a ligand contact to Ca(2+). Residue lysine 95 is modified to N6-acetyllysine. Residues aspartate 96, asparagine 98, and tyrosine 100 each contribute to the Ca(2+) site. Tyrosine 100 carries the post-translational modification Phosphotyrosine. At serine 102 the chain carries Phosphoserine. Glutamate 105 lines the Ca(2+) pocket. Threonine 111 is modified (phosphothreonine). N6,N6,N6-trimethyllysine; alternate is present on lysine 116. Lysine 116 carries the N6-methyllysine; alternate modification. Ca(2+) contacts are provided by aspartate 130, aspartate 132, aspartate 134, and glutamine 136. Tyrosine 139 carries the post-translational modification Phosphotyrosine. Ca(2+) is bound at residue glutamate 141.

It belongs to the calmodulin family. In terms of assembly, homotetramer. Interacts with MYO1C, MYO5A and RRAD. Interacts with MYO10. Interacts with CEP97, CCP110, TTN/titin and SRY. Interacts with USP6; the interaction is calcium dependent. Interacts with CDK5RAP2. Interacts with SCN5A. Interacts with RYR1. Interacts with FCHO1. Interacts with MIP in a 1:2 stoichiometry; the interaction with the cytoplasmic domains from two MIP subunits promotes MIP water channel closure. Interacts with ORAI1; this may play a role in the regulation of ORAI1-mediated calcium transport. Interacts with IQCF1. Interacts with SYT7. Interacts with CEACAM1 (via cytoplasmic domain); this interaction is in a calcium dependent manner and reduces homophilic cell adhesion through dissociation of dimer. Interacts with RYR2; regulates RYR2 calcium-release channel activity. Interacts with PCP4; regulates calmodulin calcium-binding. Interacts with the heterotetrameric KCNQ2 and KCNQ3 channel; the interaction is calcium-independent, constitutive and participates in the proper assembly of a functional heterotetrameric M channel. Interacts with alpha-synuclein/SNCA. Interacts with SLC9A1 in a calcium-dependent manner. In the absence of Ca(+2), interacts with GIMAP4 (via IQ domain). Interacts with SCN8A; the interaction modulates the inactivation rate of SCN8A. Interaction with KIF1A; the interaction is increased in presence of calcium and increases neuronal dense core vesicles motility. Interacts with KCNN3. Interacts with KCNQ1 (via C-terminus); forms a heterooctameric structure (with 4:4 KCNQ1:CALM stoichiometry) in a calcium-independent manner. Interacts with PIK3C3; the interaction modulates PIK3C3 kinase activity. Interacts with HINT1; interaction increases in the presence of calcium ions. Interacts with HINT3. Interacts with GARIN2; in mature sperm flagella. Interacts with IQUB. Interacts with SLC26A5 (via STAS domain); this interaction is calcium-dependent and the STAS domain interacts with only one lobe of CALM which is an elongated conformation. Ca(2+)-bound CALM1 binds CNGA1:CNGB1 channel (via CaM1 and CaM2 regions); this interaction modulates the affinity of the channel for cNMPs in response to intracellular Ca(2+) levels. Interacts with ITPR1; this interaction inhibits inositol 1,4,5 trisphosphate binding in both the presence and absence of calcium and 1,4,5 trisphosphate-induced calcium release in the presence of calcium. Component of the SIFI complex. Interacts with KCNN4; this interaction allows channel opening. Interacts with KCNN2; this interaction regulates the channel activity through calcium-binding. As to quaternary structure, (Microbial infection) Interacts with Rubella virus protease/methyltransferase p150. (Microbial infection) Interacts with Legionella pneumophila glutamylase SidJ. In terms of assembly, (Microbial infection) Interacts with C.violaceum CopC. C.violaceum CopC interacts specifically with the apo form of calmodulin. As to quaternary structure, (Microbial infection) Interacts with S.flexneri OspC1 and OspC3. S.flexneri OspC1 and OspC3 interact specifically with the apo form of calmodulin and prevents calcium-binding. Post-translationally, ubiquitination results in a strongly decreased activity. Phosphorylation results in a decreased activity.

The protein localises to the cytoplasm. It localises to the cytoskeleton. Its subcellular location is the spindle. The protein resides in the spindle pole. It is found in the microtubule organizing center. The protein localises to the centrosome. It localises to the cell projection. Its subcellular location is the cilium. The protein resides in the flagellum. Its activity is regulated as follows. (Microbial infection) Inactivated by S.flexneri OspC1 and OspC3 proteins, which specifically bind the apo-form of calmodulin, thereby preventing calcium-binding and activity. Calmodulin acts as part of a calcium signal transduction pathway by mediating the control of a large number of enzymes, ion channels, aquaporins and other proteins through calcium-binding. Calcium-binding is required for the activation of calmodulin. Among the enzymes to be stimulated by the calmodulin-calcium complex are a number of protein kinases, such as myosin light-chain kinases and calmodulin-dependent protein kinase type II (CaMK2), and phosphatases. Together with CCP110 and centrin, is involved in a genetic pathway that regulates the centrosome cycle and progression through cytokinesis. Is a regulator of voltage-dependent L-type calcium channels. Mediates calcium-dependent inactivation of CACNA1C. Positively regulates calcium-activated potassium channel activity of KCNN2. Forms a potassium channel complex with KCNQ1 and regulates electrophysiological activity of the channel via calcium-binding. Acts as a sensor to modulate the endoplasmic reticulum contacts with other organelles mediated by VMP1:ATP2A2. In terms of biological role, (Microbial infection) Required for Legionella pneumophila SidJ glutamylase activity. Its function is as follows. (Microbial infection) Required for C.violaceum CopC and S.flexneri OspC3 arginine ADP-riboxanase activity. The polypeptide is Calmodulin-1 (Homo sapiens (Human)).